The primary structure comprises 336 residues: Inositol 2-dehydrogenase (336 aa).

It belongs to the Gfo/Idh/MocA family. Homotetramer.

It carries out the reaction myo-inositol + NAD(+) = scyllo-inosose + NADH + H(+). Involved in the oxidation of myo-inositol (MI) to 2-keto-myo-inositol (2KMI or 2-inosose). The chain is Inositol 2-dehydrogenase from Pseudomonas fluorescens (strain SBW25).